A 473-amino-acid chain; its full sequence is Cephalotoxin-like protein (473 aa).

Positions 1 to 21 (RWLGWQKFCWISCLFSSISSG) are cleaved as a signal peptide. 2 coiled-coil regions span residues 40-60 (AINAINEEYIAQAKAIEEALK) and 116-147 (LINERFNEVNAKLDRIDEKLDEMEKSIKADTA).

In terms of tissue distribution, component of the acid-insoluble and acid-soluble organic matrix of the aragonitic skeleton (at protein level).

It is found in the secreted. The polypeptide is Cephalotoxin-like protein (Acropora millepora (Staghorn coral)).